A 259-amino-acid chain; its full sequence is uncharacterized protein (259 aa).

Residues 158–187 (VELHLKIIEEDMKETTKKNKEKKQNSQSQE) adopt a coiled-coil conformation. The segment covering 172–181 (TTKKNKEKKQ) has biased composition (basic and acidic residues). Disordered stretches follow at residues 172 to 197 (TTKKNKEKKQNSQSQEISNSIEMEVS) and 217 to 240 (PVKKTSSASKSDSDKKNKRQQLSK). Low complexity-rich tracts occupy residues 182 to 193 (NSQSQEISNSIE) and 217 to 226 (PVKKTSSASK).

This is an uncharacterized protein from Acanthamoeba polyphaga mimivirus (APMV).